Consider the following 782-residue polypeptide: Vacuolar protein sorting-associated protein 51 homolog (782 aa).

Positions 1–19 (MAAAAAAGPSPGSGPGDSP) are enriched in low complexity. The disordered stretch occupies residues 1–37 (MAAAAAAGPSPGSGPGDSPEGPEGEAPERRRKAHGML). Ala2 carries the N-acetylalanine modification. Ser18 and Ser44 each carry phosphoserine. Coiled coils occupy residues 116-147 (ISAT…AVIT) and 270-292 (EEFL…AELG). Residue Ser649 is modified to Phosphoserine.

This sequence belongs to the VPS51 family. In terms of assembly, component of the Golgi-associated retrograde protein (GARP) complex, also called VFT (VPS fifty-three) complex, composed of VPS51, VPS52, VPS53 and VPS54. Component of the endosome-associated retrograde protein (EARP) complex, composed of VPS51, VPS52, VPS53 and VPS50/Syndetin. EIPR1 interacts with both EARP and GARP complexes and mediates the recruitment of the GARP complex to the trans-Golgi network. Interacts with STX6 (via N-terminus). Interacts with VPS50 and VPS54 in an EIPR1-independent manner.

Its subcellular location is the golgi apparatus. The protein localises to the trans-Golgi network. It localises to the recycling endosome. Acts as a component of the GARP complex that is involved in retrograde transport from early and late endosomes to the trans-Golgi network (TGN). The GARP complex is required for the maintenance of protein retrieval from endosomes to the TGN, acid hydrolase sorting, lysosome function, endosomal cholesterol traffic and autophagy. VPS51 participates in retrograde transport of acid hydrolase receptors, likely by promoting tethering and SNARE-dependent fusion of endosome-derived carriers to the TGN. Acts as a component of the EARP complex that is involved in endocytic recycling. The EARP complex associates with Rab4-positive endosomes and promotes recycling of internalized transferrin receptor (TFRC) to the plasma membrane. This Homo sapiens (Human) protein is Vacuolar protein sorting-associated protein 51 homolog (VPS51).